We begin with the raw amino-acid sequence, 366 residues long: Isocitrate dehydrogenase [NAD] subunit alpha, mitochondrial (366 aa).

The N-terminal 27 residues, 1–27 (MAGPAWISKVSRLLGAFHNPKQVTRGF), are a transit peptide targeting the mitochondrion. K77 is modified (N6-succinyllysine). The residue at position 101 (T101) is a Phosphothreonine. Residues R115, R125, and R146 each contribute to the substrate site. At K223 the chain carries N6-acetyllysine. Residues D233, D257, and D261 each contribute to the Mg(2+) site. K343 bears the N6-acetyllysine; alternate mark. K343 is modified (N6-succinyllysine; alternate). N6-succinyllysine is present on K350.

It belongs to the isocitrate and isopropylmalate dehydrogenases family. Heterooligomer of subunits alpha (IDH3A), beta (IDH3B), and gamma (IDH3G) in the apparent ratio of 2:1:1. The heterodimer containing one IDH3A and one IDH3B subunit and the heterodimer containing one IDH3A and one IDH3G subunit assemble into a heterotetramer (which contains two subunits of IDH3A, one of IDH3B and one of IDH3G) and further into the heterooctamer. Requires Mg(2+) as cofactor. The cofactor is Mn(2+).

It is found in the mitochondrion. It catalyses the reaction D-threo-isocitrate + NAD(+) = 2-oxoglutarate + CO2 + NADH. With respect to regulation, the heterotetramer and the heterodimer composed of IDH3A and IDH3G subunits can be allosterically activated by citrate (CIT) or/and ADP, and the two activators can act independently or synergistically. The heterodimer composed of IDH3A and IDH3B subunits cannot be allosterically regulated and the allosteric regulation of the heterotetramer is through the IDH3G subunit and not the IDH3B subunit. The IDH3G subunit contains the allosteric site which consists of a CIT-binding site and an ADP-binding site, and the binding of CIT and ADP causes conformational changes at the allosteric site which are transmitted to the active site in the catalytic subunit (IDH3A) through a cascade of conformational changes at the heterodimer interface, leading to stabilization of the isocitrate-binding at the active site and thus activation of the enzyme. ATP can activate the heterotetramer and the heterodimer composed of IDH3A and IDH3G subunits at low concentrations but inhibits their activities at high concentrations, whereas ATP exhibits only inhibitory effect on the heterodimer composed of IDH3A and IDH3B subunits. In terms of biological role, catalytic subunit of the enzyme which catalyzes the decarboxylation of isocitrate (ICT) into alpha-ketoglutarate. The heterodimer composed of the alpha (IDH3A) and beta (IDH3B) subunits and the heterodimer composed of the alpha (IDH3A) and gamma (IDH3G) subunits, have considerable basal activity but the full activity of the heterotetramer (containing two subunits of IDH3A, one of IDH3B and one of IDH3G) requires the assembly and cooperative function of both heterodimers. The protein is Isocitrate dehydrogenase [NAD] subunit alpha, mitochondrial of Homo sapiens (Human).